Here is a 279-residue protein sequence, read N- to C-terminus: Ribosomal RNA small subunit methyltransferase A (279 aa).

Residues His11, Leu13, Gly42, Glu63, Asp88, and Asn104 each contribute to the S-adenosyl-L-methionine site.

This sequence belongs to the class I-like SAM-binding methyltransferase superfamily. rRNA adenine N(6)-methyltransferase family. RsmA subfamily.

It localises to the cytoplasm. The enzyme catalyses adenosine(1518)/adenosine(1519) in 16S rRNA + 4 S-adenosyl-L-methionine = N(6)-dimethyladenosine(1518)/N(6)-dimethyladenosine(1519) in 16S rRNA + 4 S-adenosyl-L-homocysteine + 4 H(+). Functionally, specifically dimethylates two adjacent adenosines (A1518 and A1519) in the loop of a conserved hairpin near the 3'-end of 16S rRNA in the 30S particle. May play a critical role in biogenesis of 30S subunits. The protein is Ribosomal RNA small subunit methyltransferase A of Synechococcus sp. (strain JA-3-3Ab) (Cyanobacteria bacterium Yellowstone A-Prime).